The chain runs to 288 residues: Protease HtpX homolog (288 aa).

2 consecutive transmembrane segments (helical) span residues 6–26 (TAFL…YVGG) and 28–48 (QGMM…YFFS). A Zn(2+)-binding site is contributed by histidine 130. Residue glutamate 131 is part of the active site. Residue histidine 134 coordinates Zn(2+). Transmembrane regions (helical) follow at residues 140–160 (ILTG…ANFA) and 179–199 (VIML…QMAI). Glutamate 204 is a Zn(2+) binding site.

This sequence belongs to the peptidase M48B family. Zn(2+) serves as cofactor.

The protein localises to the cell inner membrane. The polypeptide is Protease HtpX homolog (Campylobacter concisus (strain 13826)).